The following is a 246-amino-acid chain: Metallo-beta-lactamase type 2 (246 aa).

A signal peptide spans 1–20 (MKKLFVLCVCFFCSITAAGA). 5 residues coordinate Zn(2+): His95, His97, Asp99, His157, and Cys176. Asp99 provides a ligand contact to a beta-lactam. The a beta-lactam site is built by Lys179 and Asn185. His215 serves as a coordination point for Zn(2+).

This sequence belongs to the metallo-beta-lactamase superfamily. Class-B beta-lactamase family. As to quaternary structure, monomer. Zn(2+) serves as cofactor.

It is found in the periplasm. The catalysed reaction is a beta-lactam + H2O = a substituted beta-amino acid. Functionally, confers resistance to the different beta-lactam antibiotics (penicillin, cephalosporin and carbapenem) via the hydrolysis of the beta-lactam ring. Exhibits higher catalytic efficiency toward ticarcillin and piperacillin than blaIMP-1. Exhibits catalytic activity for carbapenem compounds, but has a preference for imipenem and ertapenem over meropenem. Has high efficiency for the hydrolysis of cefuroxime. Exhibits hydrolysis of all cephalosporins tested. Exhibits no hydrolysis of temocillin, the 6-alpha-methoxy semisynthetic derivative of ticarcillin. The chain is Metallo-beta-lactamase type 2 from Pseudomonas aeruginosa.